A 2263-amino-acid polypeptide reads, in one-letter code: Collagen alpha-6(VI) chain (2263 aa).

Positions 1–19 (MMLLILFLVIICSHISVNQ) are cleaved as a signal peptide. The interval 20-1391 (DSGPEYADVV…TCCCLFCKCI (1372 aa)) is nonhelical region. VWFA domains are found at residues 27 to 206 (DVVF…IKDV), 229 to 411 (DVVF…RNQI), 436 to 606 (DIYL…RNQV), 622 to 791 (DIMF…EDDL), and 809 to 982 (DVVF…FSDV). Residues asparagine 198, asparagine 275, asparagine 288, asparagine 347, and asparagine 520 are each glycosylated (N-linked (GlcNAc...) asparagine). N-linked (GlcNAc...) asparagine glycans are attached at residues asparagine 930 and asparagine 988. VWFA domains follow at residues 1000 to 1171 (DLVF…NKRI) and 1187 to 1371 (DVVV…GSRL). Asparagine 1290 carries N-linked (GlcNAc...) asparagine glycosylation. Positions 1392–1725 (GGDGTMGDPG…GRKGVKGAKG (334 aa)) are triple-helical region. Residues 1397 to 1723 (MGDPGPPGKR…PPGRKGVKGA (327 aa)) form a disordered region. Basic and acidic residues predominate over residues 1498–1508 (TPGDRGAKGLR). A Cell attachment site motif is present at residues 1508 to 1510 (RGD). Positions 1547 to 1559 (SRRKTAAHGRRGH) are enriched in basic residues. A compositionally biased stretch (gly residues) spans 1680-1689 (GDPGGPGETG). The interval 1726 to 2263 (LASFSTCELI…MIESAPKQHD (538 aa)) is nonhelical region. VWFA domains follow at residues 1757–1937 (ELVF…ERLQ) and 1965–2166 (DAAF…INSI).

Belongs to the type VI collagen family. Trimers composed of three different chains: alpha-1(VI), alpha-2(VI), and alpha-3(VI) or alpha-5(VI) or alpha-6(VI). Post-translationally, prolines at the third position of the tripeptide repeating unit (G-X-Y) are hydroxylated in some or all of the chains.

The protein localises to the secreted. Its subcellular location is the extracellular space. It is found in the extracellular matrix. Collagen VI acts as a cell-binding protein. The sequence is that of Collagen alpha-6(VI) chain (COL6A6) from Homo sapiens (Human).